The primary structure comprises 182 residues: NADH-quinone oxidoreductase subunit I (182 aa).

2 4Fe-4S ferredoxin-type domains span residues 52–82 (LTRD…LQKA) and 92–121 (DFFR…LTPD). The [4Fe-4S] cluster site is built by cysteine 62, cysteine 65, cysteine 68, cysteine 72, cysteine 101, cysteine 104, cysteine 107, and cysteine 111.

This sequence belongs to the complex I 23 kDa subunit family. As to quaternary structure, NDH-1 is composed of 13 different subunits. Subunits NuoA, H, J, K, L, M, N constitute the membrane sector of the complex. It depends on [4Fe-4S] cluster as a cofactor.

The protein resides in the cell inner membrane. The enzyme catalyses a quinone + NADH + 5 H(+)(in) = a quinol + NAD(+) + 4 H(+)(out). Its function is as follows. NDH-1 shuttles electrons from NADH, via FMN and iron-sulfur (Fe-S) centers, to quinones in the respiratory chain. The immediate electron acceptor for the enzyme in this species is believed to be ubiquinone. Couples the redox reaction to proton translocation (for every two electrons transferred, four hydrogen ions are translocated across the cytoplasmic membrane), and thus conserves the redox energy in a proton gradient. The protein is NADH-quinone oxidoreductase subunit I of Pseudomonas syringae pv. syringae (strain B728a).